Here is a 346-residue protein sequence, read N- to C-terminus: N-acetyl-gamma-glutamyl-phosphate reductase (346 aa).

Cys149 is a catalytic residue.

Belongs to the NAGSA dehydrogenase family. Type 1 subfamily.

Its subcellular location is the cytoplasm. The catalysed reaction is N-acetyl-L-glutamate 5-semialdehyde + phosphate + NADP(+) = N-acetyl-L-glutamyl 5-phosphate + NADPH + H(+). It functions in the pathway amino-acid biosynthesis; L-arginine biosynthesis; N(2)-acetyl-L-ornithine from L-glutamate: step 3/4. Functionally, catalyzes the NADPH-dependent reduction of N-acetyl-5-glutamyl phosphate to yield N-acetyl-L-glutamate 5-semialdehyde. This Geobacter sp. (strain M21) protein is N-acetyl-gamma-glutamyl-phosphate reductase.